Here is a 171-residue protein sequence, read N- to C-terminus: Adenine phosphoribosyltransferase (171 aa).

The protein belongs to the purine/pyrimidine phosphoribosyltransferase family. In terms of assembly, homodimer.

The protein resides in the cytoplasm. The enzyme catalyses AMP + diphosphate = 5-phospho-alpha-D-ribose 1-diphosphate + adenine. The protein operates within purine metabolism; AMP biosynthesis via salvage pathway; AMP from adenine: step 1/1. Functionally, catalyzes a salvage reaction resulting in the formation of AMP, that is energically less costly than de novo synthesis. The sequence is that of Adenine phosphoribosyltransferase from Prochlorococcus marinus (strain MIT 9515).